Consider the following 134-residue polypeptide: D-ribose pyranase (134 aa).

His20 functions as the Proton donor in the catalytic mechanism. Substrate-binding positions include Asp28, His101, and 123 to 125; that span reads YSN.

This sequence belongs to the RbsD / FucU family. RbsD subfamily. In terms of assembly, homodecamer.

Its subcellular location is the cytoplasm. It carries out the reaction beta-D-ribopyranose = beta-D-ribofuranose. It functions in the pathway carbohydrate metabolism; D-ribose degradation; D-ribose 5-phosphate from beta-D-ribopyranose: step 1/2. Its function is as follows. Catalyzes the interconversion of beta-pyran and beta-furan forms of D-ribose. This Pseudomonas entomophila (strain L48) protein is D-ribose pyranase.